Reading from the N-terminus, the 279-residue chain is CDP-paratose synthase (279 aa).

Tyr115 acts as the Proton acceptor in catalysis.

It belongs to the NAD(P)-dependent epimerase/dehydratase family.

The catalysed reaction is CDP-alpha-D-paratose + NADP(+) = CDP-4-dehydro-3,6-dideoxy-alpha-D-glucose + NADPH + H(+). It functions in the pathway nucleotide-sugar biosynthesis; CDP-3,6-dideoxy-D-mannose biosynthesis; CDP-3,6-dideoxy-D-mannose from CTP and alpha-D-glucose 1-phosphate: step 4/5. Its function is as follows. Catalyzes synthesis of paratose and tyvelose, unusual 3,6-dideoxyhexose sugars that form part of the O-antigen in the lipopolysaccharides of several enteric bacteria. In Salmonella typhi, this protein is CDP-paratose synthase (rfbS).